The following is a 746-amino-acid chain: Polyribonucleotide nucleotidyltransferase (746 aa).

2 residues coordinate Mg(2+): Asp-490 and Asp-496. A KH domain is found at Pro-557–Ile-619. An S1 motif domain is found at Gly-629 to Lys-699. The segment at Leu-701–Asp-746 is disordered. The span at Glu-706–Asp-746 shows a compositional bias: basic and acidic residues.

This sequence belongs to the polyribonucleotide nucleotidyltransferase family. Mg(2+) is required as a cofactor.

Its subcellular location is the cytoplasm. The enzyme catalyses RNA(n+1) + phosphate = RNA(n) + a ribonucleoside 5'-diphosphate. In terms of biological role, involved in mRNA degradation. Catalyzes the phosphorolysis of single-stranded polyribonucleotides processively in the 3'- to 5'-direction. The protein is Polyribonucleotide nucleotidyltransferase of Parabacteroides distasonis (strain ATCC 8503 / DSM 20701 / CIP 104284 / JCM 5825 / NCTC 11152).